A 594-amino-acid polypeptide reads, in one-letter code: Class I diterpene synthase TPS6, chloroplastic (594 aa).

Mg(2+)-binding residues include Asp-330, Asp-334, Asn-474, Gln-477, and Glu-482. The short motif at 330-334 is the DDXXD motif element; it reads DDFFD.

Belongs to the terpene synthase family. The cofactor is Mg(2+). Mostly expressed in trichomes of leaves and fruits.

The protein resides in the plastid. The protein localises to the chloroplast. The catalysed reaction is peregrinol diphosphate = labd-13(16),14-diene-9-ol + diphosphate. It carries out the reaction 9alpha-copalyl diphosphate = syn-isopimara-7,15-diene + diphosphate. Its pathway is secondary metabolite biosynthesis; terpenoid biosynthesis. In terms of biological role, involved in the biosynthesis of labdane-type diterpenoid including cleroda-dienols, and peregrinol lactones and furan derivatives, dopaminergic diterpenoids that can bind to dopamine receptors in the human pituitary gland, have probably ability to lower prolactin levels, and are used to treat menstrual cycle disorders (e.g. premenstrual syndrome and mastodynia). Terpene synthase the catalyzes the conversion of peregrinol diphosphate to labda-13(16),14-dien-9-ol, and of syn-copalyl diphosophate to dehydroabietadiene and syn-isopimara-7,15-diene. This chain is Class I diterpene synthase TPS6, chloroplastic, found in Vitex agnus-castus (Chaste tree).